We begin with the raw amino-acid sequence, 106 residues long: UPF0060 membrane protein R01043 (106 aa).

Helical transmembrane passes span 5–25, 31–51, 61–81, and 85–105; these read AIYF…WSWL, ALWL…LTMV, AAYG…AEGV, and HWDM…LAGP.

The protein belongs to the UPF0060 family.

It localises to the cell inner membrane. The chain is UPF0060 membrane protein R01043 from Rhizobium meliloti (strain 1021) (Ensifer meliloti).